Reading from the N-terminus, the 969-residue chain is MLDFLKRFFGSSQERTLKKFQKLVDKVNLYDEMLAPLSDEELRNKTAELKKRYQDGESLDDMLPEAYAVVKNVCRRLTGTPVEVSGYHQNWDMVPYDVQVLGAIAMHKGFITEMQTGEGKTLTAVMPLYLNALTGKPVHLVTVNDYLAQRDCEWVGSILRWLGLTTGVLISGSPLEKRKDIYRCDVVYGTASEFGFDYLRDNSIATSVDEQVGRGFYFAIIDEVDSILIDEARTPLIISGPGEKHNPVYFELKDKVADLVQLQRELCNQLALEARRGLELFLDMDILPKDKKVIEAISEFCRSLWLVSKGMPLNRVLRRVREHPDLRAMIDKWDTYYHAEQNKEESIEKLSQLYIIVDEHNNDFELTDRGMQQWVDKAGGSAEDFVMMDMGHEYALIDGDDTLSPTEKINRKIAISEEDTRRKARAHGLRQLLRAHLLMERDVDYIVRNDQIVIIDEHTGRPQPGRRFSEGLHQAIEAKEHVTIRKESQTFATVTLQNFFRLYEKLAGMTGTAITESKEFKEIYNLYVLQVPTFKECLRVDHNDEFYMTEREKYHAIVKEIARIHAVGNPILIGTESVEVSEKLSRILRQNRIEHTVLNAKNHAQEAEIIAAAGKLGAVTVATNMAGRGTDIKLDEEAVVVGGLHVIGTSRHQSRRIDRQLRGRCARLGDPGSAKFFLSFEDRLMRLFASPKLNALIRHFRPPEGEAMSDPMFNKLIETAQKRVEARNYTIRKHTLEYDDVMNRQRQTIYAFRNDVIRSEDIFGLAKEAISHVALMIASLIVSRDHPTGNSLPRLEEWMNYSFPLQLNIEELKRLKSIDAIAERVADDLIEVFQNKFASMVQEITEAAGEKVDANGVCKDVIRSVMIMHIDEQWKIHLVDMDLLRSEVGLRTVGQKDPLIEFKHESFLLFESLIRDIRIAIVKHLFRLELTMTREQRPQNVVPVVATSFQNNENFGPLELTVISDSDDE.

ATP-binding positions include Gln99, 117–121 (GEGKT), and Asp631.

Belongs to the SecA family. Monomer and homodimer. Part of the essential Sec protein translocation apparatus which comprises SecA, SecYEG and auxiliary proteins SecDF. Other proteins may also be involved.

Its subcellular location is the cell inner membrane. It is found in the cytoplasm. The catalysed reaction is ATP + H2O + cellular proteinSide 1 = ADP + phosphate + cellular proteinSide 2.. In terms of biological role, part of the Sec protein translocase complex. Interacts with the SecYEG preprotein conducting channel. Has a central role in coupling the hydrolysis of ATP to the transfer of proteins into and across the cell membrane, serving as an ATP-driven molecular motor driving the stepwise translocation of polypeptide chains across the membrane. In Chlamydia abortus (strain DSM 27085 / S26/3) (Chlamydophila abortus), this protein is Protein translocase subunit SecA.